A 144-amino-acid polypeptide reads, in one-letter code: Maximins 3/H14 (144 aa).

The first 18 residues, 1 to 18 (MNFKYIVAVSFLIASAYA), serve as a signal peptide directing secretion. 2 propeptides span residues 19 to 43 (RSVQ…REIR) and 73 to 122 (RTAE…KKEK). Isoleucine 143 is modified (isoleucine amide).

This sequence belongs to the bombinin family. As to expression, expressed by the skin glands.

It is found in the secreted. Its function is as follows. Maximin-3 shows antibacterial activity against both Gram-positive and Gram-negative bacteria. It also shows antimicrobial activity against the fungus C.albicans, but not against A.flavus nor P.uticale. It has little hemolytic activity. It possess a significant cytotoxicity against tumor cell lines. It possess a significant anti-HIV activity. It shows high spermicidal activity. In terms of biological role, maximin-H14 shows antimicrobial activity against bacteria and against the fungus C.albicans. Shows strong hemolytic activity. The sequence is that of Maximins 3/H14 from Bombina maxima (Giant fire-bellied toad).